Consider the following 248-residue polypeptide: Ubiquinone biosynthesis O-methyltransferase (248 aa).

The S-adenosyl-L-methionine site is built by Arg-41, Gly-72, Asp-93, and Met-136.

It belongs to the methyltransferase superfamily. UbiG/COQ3 family.

The catalysed reaction is a 3-demethylubiquinol + S-adenosyl-L-methionine = a ubiquinol + S-adenosyl-L-homocysteine + H(+). It catalyses the reaction a 3-(all-trans-polyprenyl)benzene-1,2-diol + S-adenosyl-L-methionine = a 2-methoxy-6-(all-trans-polyprenyl)phenol + S-adenosyl-L-homocysteine + H(+). It functions in the pathway cofactor biosynthesis; ubiquinone biosynthesis. O-methyltransferase that catalyzes the 2 O-methylation steps in the ubiquinone biosynthetic pathway. The sequence is that of Ubiquinone biosynthesis O-methyltransferase from Rhizobium etli (strain ATCC 51251 / DSM 11541 / JCM 21823 / NBRC 15573 / CFN 42).